Consider the following 222-residue polypeptide: Inositol diphosphatase DSP1 (222 aa).

The span at 1–14 (MRQEATCSLVLTQD) shows a compositional bias: polar residues. A disordered region spans residues 1-41 (MRQEATCSLVLTQDAQHRKNQPPLAEEDDDRDHTDDAMPPP). The Tyrosine-protein phosphatase domain occupies 68–222 (NFAMVDHGVY…LKHLPASFSC (155 aa)). The segment at 124–136 (FGIDGSKEPFVNI) is WPD loop important for active site topology. 1D-myo-inositol hexakisphosphate contacts are provided by asparagine 135, isoleucine 136, and arginine 140. Catalysis depends on cysteine 160, which acts as the Phosphocysteine intermediate.

Belongs to the protein-tyrosine phosphatase family. Atypical dual-specificity phosphatase Siw14-like subfamily.

It is found in the nucleus. It localises to the cytoplasm. It catalyses the reaction 5-diphospho-1D-myo-inositol 1,2,3,4,6-pentakisphosphate + H2O = 1D-myo-inositol hexakisphosphate + phosphate + H(+). It carries out the reaction 1,5-bis(diphospho)-1D-myo-inositol 2,3,4,6-tetrakisphosphate + H2O = 1-diphospho-1D-myo-inositol 2,3,4,5,6-pentakisphosphate + phosphate + 2 H(+). The catalysed reaction is 3,5-bis(diphospho)-1D-myo-inositol 1,2,4,6-tetrakisphosphate + H2O = 3-diphospho-1D-myo-inositol 1,2,4,5,6-pentakisphosphate + phosphate + 2 H(+). The enzyme catalyses 6-diphospho-1D-myo-inositol pentakisphosphate + H2O = 1D-myo-inositol hexakisphosphate + phosphate + H(+). Cleaves the beta-phosphate at the 5-position of soluble inositol pyrophosphates. Has highest activity on 5-diphosphoinositol 1,2,3,4,6-pentakisphosphate (5-InsP(7)). Possesses phosphotyrosine phosphatase activity in vitro. May contribute to regulation of drought stress responses. This is Inositol diphosphatase DSP1 from Oryza sativa subsp. japonica (Rice).